The sequence spans 626 residues: Chaperone protein HtpG (626 aa).

Residues 1-341 (METKQFKAES…SEDLSLNISR (341 aa)) are a; substrate-binding. The interval 342-552 (EILQHDRQLK…EGELSIEMEK (211 aa)) is b. The disordered stretch occupies residues 490-509 (DLGIEGEEKENTSSSDDKEN). The segment covering 498 to 509 (KENTSSSDDKEN) has biased composition (basic and acidic residues). The segment at 553–626 (VLNAMPNNQN…FTNNICKIMK (74 aa)) is c.

Belongs to the heat shock protein 90 family. In terms of assembly, homodimer.

Its subcellular location is the cytoplasm. Molecular chaperone. Has ATPase activity. The protein is Chaperone protein HtpG of Clostridium botulinum (strain Okra / Type B1).